A 330-amino-acid polypeptide reads, in one-letter code: ADP-L-glycero-D-manno-heptose-6-epimerase (330 aa).

Residues 11–12, 32–33, Q39, Q54, 75–79, and N92 each bind NADP(+); these read FI, DD, and QGACA. The active-site Proton acceptor is Y139. NADP(+) is bound at residue K143. N168 serves as a coordination point for substrate. 2 residues coordinate NADP(+): V169 and K177. K177 serves as the catalytic Proton acceptor. Substrate is bound by residues R179, H186, 200–203, R213, and Y292; that span reads FGEH.

Belongs to the NAD(P)-dependent epimerase/dehydratase family. HldD subfamily. As to quaternary structure, homopentamer. Requires NADP(+) as cofactor.

It catalyses the reaction ADP-D-glycero-beta-D-manno-heptose = ADP-L-glycero-beta-D-manno-heptose. The protein operates within nucleotide-sugar biosynthesis; ADP-L-glycero-beta-D-manno-heptose biosynthesis; ADP-L-glycero-beta-D-manno-heptose from D-glycero-beta-D-manno-heptose 7-phosphate: step 4/4. Its pathway is bacterial outer membrane biogenesis; LPS core biosynthesis. Catalyzes the interconversion between ADP-D-glycero-beta-D-manno-heptose and ADP-L-glycero-beta-D-manno-heptose via an epimerization at carbon 6 of the heptose. The chain is ADP-L-glycero-D-manno-heptose-6-epimerase from Pseudomonas aeruginosa (strain ATCC 15692 / DSM 22644 / CIP 104116 / JCM 14847 / LMG 12228 / 1C / PRS 101 / PAO1).